We begin with the raw amino-acid sequence, 204 residues long: Protein C (204 aa).

Residues 1-78 (MPSFLRGILK…TEQSQRRPKI (78 aa)) form a disordered region. A compositionally biased stretch (basic and acidic residues) spans 10–20 (KPKERHHENKN). Over residues 25-34 (SSDSLTSSYP) the composition is skewed to low complexity.

Belongs to the respirovirus protein C family.

This is Protein C (P/V/C) from Homo sapiens (Human).